We begin with the raw amino-acid sequence, 638 residues long: tRNA uridine 5-carboxymethylaminomethyl modification enzyme MnmG (638 aa).

Residues 13–18 (GGGHAG), V125, and S180 each bind FAD. 273 to 287 (GPRYCPSIEDKIHRF) provides a ligand contact to NAD(+). Q370 contributes to the FAD binding site.

This sequence belongs to the MnmG family. In terms of assembly, homodimer. Heterotetramer of two MnmE and two MnmG subunits. It depends on FAD as a cofactor.

It localises to the cytoplasm. NAD-binding protein involved in the addition of a carboxymethylaminomethyl (cmnm) group at the wobble position (U34) of certain tRNAs, forming tRNA-cmnm(5)s(2)U34. The polypeptide is tRNA uridine 5-carboxymethylaminomethyl modification enzyme MnmG (Cellvibrio japonicus (strain Ueda107) (Pseudomonas fluorescens subsp. cellulosa)).